The primary structure comprises 105 residues: Met repressor (105 aa).

It belongs to the MetJ family. Homodimer.

The protein resides in the cytoplasm. This regulatory protein, when combined with SAM (S-adenosylmethionine) represses the expression of the methionine regulon and of enzymes involved in SAM synthesis. The protein is Met repressor of Histophilus somni (strain 129Pt) (Haemophilus somnus).